Reading from the N-terminus, the 591-residue chain is Aspartate--tRNA(Asp/Asn) ligase (591 aa).

Residue glutamate 175 coordinates L-aspartate. The aspartate stretch occupies residues 199–202; that stretch reads QQYK. Residues arginine 221 and histidine 450 each contribute to the L-aspartate site. 221 to 223 contacts ATP; it reads RDE. An ATP-binding site is contributed by glutamate 484. Arginine 491 provides a ligand contact to L-aspartate. An ATP-binding site is contributed by 536 to 539; that stretch reads GVDR.

Belongs to the class-II aminoacyl-tRNA synthetase family. Type 1 subfamily. As to quaternary structure, homodimer.

Its subcellular location is the cytoplasm. It carries out the reaction tRNA(Asx) + L-aspartate + ATP = L-aspartyl-tRNA(Asx) + AMP + diphosphate. Aspartyl-tRNA synthetase with relaxed tRNA specificity since it is able to aspartylate not only its cognate tRNA(Asp) but also tRNA(Asn). Reaction proceeds in two steps: L-aspartate is first activated by ATP to form Asp-AMP and then transferred to the acceptor end of tRNA(Asp/Asn). This Rhodopseudomonas palustris (strain TIE-1) protein is Aspartate--tRNA(Asp/Asn) ligase.